Consider the following 1664-residue polypeptide: DNA-directed RNA polymerase I subunit RPA190 (1664 aa).

Zn(2+)-binding residues include C62, C65, C72, H75, C102, C105, C233, and C236. The segment at 280-310 is disordered; sequence QAKKLDGSNEASANDEESFDVGRNPTTRPKT. Residues D627, D629, and D631 each contribute to the Mg(2+) site. S889 is modified (phosphoserine). A bridging helix region spans residues 992–1004; sequence PQEYYFHCMAGRE. The interval 1343-1423 is disordered; sequence DIGVAVPRLQ…DSDSEDEDVD (81 aa). Residues 1393–1414 are compositionally biased toward basic and acidic residues; sequence ETMREAEKSSDEEGIDSDKESD. A Phosphoserine modification is found at S1636.

It belongs to the RNA polymerase beta' chain family. As to quaternary structure, component of the RNA polymerase I (Pol I) complex consisting of 14 subunits: RPA135, RPA190, RPC40, RPA14, RPB5, RPO26, RPA43, RPB8, RPA12, RPB10, RPC19, RPC10, RPA49 and RPA34. The complex is composed of a horseshoe-shaped core containing ten subunits (RPA135, RPA190, RPB5, RPO26, RPB8, RPB10, RPC10, RPA12, RPC19 and RPC40) where RPA135 and RPA190 form the DNA-binding cleft. Outside of the core, RPA14 and RPA43 form the stalk that mediates interactions with transcription initiation factors and newly synthesized RNA.

The protein localises to the nucleus. It localises to the nucleolus. It carries out the reaction RNA(n) + a ribonucleoside 5'-triphosphate = RNA(n+1) + diphosphate. DNA-dependent RNA polymerases catalyze the transcription of DNA into RNA using the four ribonucleoside triphosphates as substrates. Component of RNA polymerase I (Pol I) which synthesizes ribosomal RNA precursors. Besides, RNA polymerase I has intrinsic RNA cleavage activity. RPA190 and RPA135 both contribute to the polymerase catalytic activity and together form the Pol I active center. In addition, subunit RPA12 contributes a catalytic zinc ribbon that is required for RNA cleavage by Pol I. A single stranded DNA template strand of the promoter is positioned within the central active site cleft of Pol I. A bridging helix emanates from RPA190 and crosses the cleft near the catalytic site and is thought to promote translocation of Pol I by acting as a ratchet that moves the RNA-DNA hybrid through the active site by switching from straight to bent conformations at each step of nucleotide addition. This is DNA-directed RNA polymerase I subunit RPA190 (RPA190) from Saccharomyces cerevisiae (strain ATCC 204508 / S288c) (Baker's yeast).